The primary structure comprises 440 residues: MPLQWFLKYRPKTLNEVENEEDAKKELVEWIESWLKGKPNYKAVLLYGPPGVGKTTLAEALARDYKLELFEMNASDSRNLNDIRTMAERASITGTIFGIKGKLILLDEVDGLNARADAGAIDAILELINKTKYPIILTANDPWDPSLRPLRNAVKMIELKRLTKYPLKRILKKICEAEKITCEDEALDFIIEQSEGDARYAINMLQGVAEGYGRVTLDMAKNLVRRKDRELDPFEALRGVFWAKYYWQAKSAVTDTQIDYELLMRWLDENIPLQYDNLEDVWRAYDALSRASLFLTRSKLVGWDLLSYTFDLMGPGIAFASLEKKKPTYKAKWVKYQFPQYIQQLAKTKEIRDALDTLLRKIGQAIHASKDKTLNDFLPAFIIYYRKYQEKLDKELELTEKEKDVIKLISSFYEGSKVEIEEPEKKEPSKRRTTSYRRKS.

48-55 (GPPGVGKT) contributes to the ATP binding site.

Belongs to the activator 1 small subunits family. RfcL subfamily. As to quaternary structure, heteromultimer composed of small subunits (RfcS) and large subunits (RfcL).

Its function is as follows. Part of the RFC clamp loader complex which loads the PCNA sliding clamp onto DNA. The chain is Replication factor C large subunit from Sulfurisphaera tokodaii (strain DSM 16993 / JCM 10545 / NBRC 100140 / 7) (Sulfolobus tokodaii).